A 111-amino-acid polypeptide reads, in one-letter code: Putative splicing factor C222.18 (111 aa).

The RRM domain occupies 18–95 (HTLYIRNFGT…DIIFVEWAKS (78 aa)).

It belongs to the splicing factor SR family.

It localises to the nucleus. Its function is as follows. Has a role in pre-mRNA splicing where it is involved in spliceosome assembly. The chain is Putative splicing factor C222.18 from Schizosaccharomyces pombe (strain 972 / ATCC 24843) (Fission yeast).